Reading from the N-terminus, the 643-residue chain is Threonine--tRNA ligase (643 aa).

The TGS domain maps to 1–61 (MPTIKFIDGT…TNDSIVKFVY (61 aa)). A catalytic region spans residues 244-535 (DHRKISKILD…LIEEYIGNFP (292 aa)). Positions 335, 386, and 512 each coordinate Zn(2+).

This sequence belongs to the class-II aminoacyl-tRNA synthetase family. As to quaternary structure, homodimer. It depends on Zn(2+) as a cofactor.

The protein resides in the cytoplasm. It carries out the reaction tRNA(Thr) + L-threonine + ATP = L-threonyl-tRNA(Thr) + AMP + diphosphate + H(+). Functionally, catalyzes the attachment of threonine to tRNA(Thr) in a two-step reaction: L-threonine is first activated by ATP to form Thr-AMP and then transferred to the acceptor end of tRNA(Thr). Also edits incorrectly charged L-seryl-tRNA(Thr). The sequence is that of Threonine--tRNA ligase from Buchnera aphidicola subsp. Baizongia pistaciae (strain Bp).